We begin with the raw amino-acid sequence, 319 residues long: MNPNYLDFEQPIADLEAKIQELRTASAGPSVNVDTEVRALENKLRLRTAQIFRNLSAWQISQLARHPRRPYTLDYISVVCDEFQELAGDRTLADDKAIVGGLARIGHRPVMLIGHQKGRDNKERLMRNFGMPKPEGYRKALRLMKLAERFGLPLLTFIDTMGAWPGIDAEERNQSEAIATNLIEMAELKIPVICTVIGEGGSGGALAIGIGDRTLMLEYSTYSVITPEGCASILWKDAAKASDAAEQLNLTARRLKEFGLIDKVIREPIGGAHRNPQQMANRLKAVLLNELEALDKVPLVTLLNQRHKRLRTYGAYENH.

The CoA carboxyltransferase C-terminal domain occupies 32–293; that stretch reads NVDTEVRALE…KAVLLNELEA (262 aa).

The protein belongs to the AccA family. As to quaternary structure, acetyl-CoA carboxylase is a heterohexamer composed of biotin carboxyl carrier protein (AccB), biotin carboxylase (AccC) and two subunits each of ACCase subunit alpha (AccA) and ACCase subunit beta (AccD).

Its subcellular location is the cytoplasm. The enzyme catalyses N(6)-carboxybiotinyl-L-lysyl-[protein] + acetyl-CoA = N(6)-biotinyl-L-lysyl-[protein] + malonyl-CoA. It functions in the pathway lipid metabolism; malonyl-CoA biosynthesis; malonyl-CoA from acetyl-CoA: step 1/1. Component of the acetyl coenzyme A carboxylase (ACC) complex. First, biotin carboxylase catalyzes the carboxylation of biotin on its carrier protein (BCCP) and then the CO(2) group is transferred by the carboxyltransferase to acetyl-CoA to form malonyl-CoA. This Xylella fastidiosa (strain M12) protein is Acetyl-coenzyme A carboxylase carboxyl transferase subunit alpha.